The sequence spans 119 residues: Basic phospholipase A2 notechis II-5 (119 aa).

Intrachain disulfides connect cysteine 11–cysteine 71, cysteine 27–cysteine 118, cysteine 29–cysteine 45, cysteine 44–cysteine 99, cysteine 51–cysteine 92, cysteine 60–cysteine 85, and cysteine 78–cysteine 90. Residues tyrosine 28, glycine 30, and glycine 32 each coordinate Ca(2+). Residue histidine 48 is part of the active site. A Ca(2+)-binding site is contributed by aspartate 49. The active site involves aspartate 93.

Belongs to the phospholipase A2 family. Group I subfamily. D49 sub-subfamily. The cofactor is Ca(2+). In terms of tissue distribution, expressed by the venom gland.

It localises to the secreted. The enzyme catalyses a 1,2-diacyl-sn-glycero-3-phosphocholine + H2O = a 1-acyl-sn-glycero-3-phosphocholine + a fatty acid + H(+). Its function is as follows. Snake venom phospholipase A2 (PLA2) that inhibits neuromuscular transmission by blocking acetylcholine release from the nerve termini. Notechis II-5 is less toxic than notexin but has a higher specific phospholipase activity. PLA2 catalyzes the calcium-dependent hydrolysis of the 2-acyl groups in 3-sn-phosphoglycerides. The protein is Basic phospholipase A2 notechis II-5 of Notechis scutatus scutatus (Mainland tiger snake).